The primary structure comprises 543 residues: Serine/threonine-protein kinase Chk2 (543 aa).

Residues 1–66 (MSRESDVEAQ…SGTLSSLETV (66 aa)) form a disordered region. Over residues 8 to 22 (EAQQSHGSSACSQPH) the composition is skewed to polar residues. Positions 23 to 62 (GSVTQSQGSSSQSQGISSSSTSTMPNSSQSSHSSSGTLSS) are enriched in low complexity. Phosphoserine; by PLK3 is present on Ser-62. Thr-68 bears the Phosphothreonine; by ATM and MAP3K20 mark. The residue at position 73 (Ser-73) is a Phosphoserine; by PLK3. Residues 113 to 175 (YWFGRDKSCE…NGTFVNTELV (63 aa)) enclose the FHA domain. Positions 220 to 486 (YIMSKTLGSG…TEEALRHPWL (267 aa)) constitute a Protein kinase domain. ATP contacts are provided by residues 227–234 (GSGACGEV), Lys-249, and 302–308 (ELMEGGE). Asp-347 functions as the Proton acceptor in the catalytic mechanism. ATP contacts are provided by residues 351–352 (EN) and Asp-368. The tract at residues 368-394 (DFGHSKILGETSLMRTLCGTPTYLAPE) is T-loop/activation segment. Ser-379 bears the Phosphoserine; by autocatalysis mark. A phosphothreonine; by autocatalysis mark is found at Thr-383 and Thr-387. Ser-456 is subject to Phosphoserine. The span at 506–517 (TALPQVLAQPST) shows a compositional bias: polar residues. Residues 506–538 (TALPQVLAQPSTSRKRPREGEAEGAETTKRPAV) are disordered. The segment covering 523–534 (REGEAEGAETTK) has biased composition (basic and acidic residues).

This sequence belongs to the protein kinase superfamily. CAMK Ser/Thr protein kinase family. CHK2 subfamily. Homodimer. Homodimerization is part of the activation process but the dimer may dissociate following activation. Interacts with PML. Interacts with TP53. Interacts with RB1; phosphorylates RB1. Interacts with BRCA1. Interacts (phosphorylated at Thr-68) with MDC1; requires ATM-mediated phosphorylation of CHEK2. Interacts with TP53BP1; modulates CHEK2 phosphorylation at Thr-68 in response to ionizing radiation. Interacts with CDC25A; phosphorylates CDC25A and mediates its degradation in response to ionizing radiation. Interacts with CUL1; mediates CHEK2 ubiquitination and regulation. Interacts with CDKN2AIP. Interacts (via protein kinase domain) with CCAR2 (via N-terminus). Interacts with SIRT1. Requires Mg(2+) as cofactor. Phosphorylated. Phosphorylated at Ser-73 by PLK3 in response to DNA damage, promoting phosphorylation at Thr-68 by ATM and the G2/M transition checkpoint. Phosphorylation at Thr-68 induces homodimerization. Autophosphorylates at Thr-383 and Thr-387 in the T-loop/activation segment upon dimerization to become fully active and phosphorylate its substrates like for instance CDC25C. DNA damage-induced autophosphorylation at Ser-379 induces CUL1-mediated ubiquitination and regulates the pro-apoptotic function. Phosphorylation at Ser-456 also regulates ubiquitination. Phosphorylated by PLK4. Post-translationally, ubiquitinated. CUL1-mediated ubiquitination regulates the pro-apoptotic function. Ubiquitination may also regulate protein stability. Ubiquitinated by RNF8 via 'Lys-48'-linked ubiquitination. As to expression, high expression is found in testis, spleen, colon and peripheral blood leukocytes. Low expression is found in other tissues.

The protein resides in the nucleus. Its subcellular location is the PML body. The protein localises to the nucleoplasm. It carries out the reaction L-seryl-[protein] + ATP = O-phospho-L-seryl-[protein] + ADP + H(+). It catalyses the reaction L-threonyl-[protein] + ATP = O-phospho-L-threonyl-[protein] + ADP + H(+). Its activity is regulated as follows. Activated through phosphorylation at Thr-68 by ATM in response to DNA double-strand breaks. Activation is modulated by several mediators including MDC1 and TP53BP1. Induces homodimerization with exchange of the T-loop/activation segment between protomers and transphosphorylation of the protomers. The autophosphorylated kinase dimer is fully active. Negatively regulated by PPM1D through dephosphorylation of Thr-68. Serine/threonine-protein kinase which is required for checkpoint-mediated cell cycle arrest, activation of DNA repair and apoptosis in response to the presence of DNA double-strand breaks. May also negatively regulate cell cycle progression during unperturbed cell cycles. Following activation, phosphorylates numerous effectors preferentially at the consensus sequence [L-X-R-X-X-S/T]. Regulates cell cycle checkpoint arrest through phosphorylation of CDC25A, CDC25B and CDC25C, inhibiting their activity. Inhibition of CDC25 phosphatase activity leads to increased inhibitory tyrosine phosphorylation of CDK-cyclin complexes and blocks cell cycle progression. May also phosphorylate NEK6 which is involved in G2/M cell cycle arrest. Regulates DNA repair through phosphorylation of BRCA2, enhancing the association of RAD51 with chromatin which promotes DNA repair by homologous recombination. Also stimulates the transcription of genes involved in DNA repair (including BRCA2) through the phosphorylation and activation of the transcription factor FOXM1. Regulates apoptosis through the phosphorylation of p53/TP53, MDM4 and PML. Phosphorylation of p53/TP53 at 'Ser-20' by CHEK2 may alleviate inhibition by MDM2, leading to accumulation of active p53/TP53. Phosphorylation of MDM4 may also reduce degradation of p53/TP53. Also controls the transcription of pro-apoptotic genes through phosphorylation of the transcription factor E2F1. Tumor suppressor, it may also have a DNA damage-independent function in mitotic spindle assembly by phosphorylating BRCA1. Its absence may be a cause of the chromosomal instability observed in some cancer cells. Promotes the CCAR2-SIRT1 association and is required for CCAR2-mediated SIRT1 inhibition. Under oxidative stress, promotes ATG7 ubiquitination by phosphorylating the E3 ubiquitin ligase TRIM32 at 'Ser-55' leading to positive regulation of the autophagosme assembly. Functionally, (Microbial infection) Phosphorylates herpes simplex virus 1/HHV-1 protein ICP0 and thus activates its SUMO-targeted ubiquitin ligase activity. The protein is Serine/threonine-protein kinase Chk2 of Homo sapiens (Human).